The sequence spans 61 residues: Small ribosomal subunit protein uS14 (61 aa).

The Zn(2+) site is built by Cys-24, Cys-27, Cys-40, and Cys-43.

Belongs to the universal ribosomal protein uS14 family. Zinc-binding uS14 subfamily. Part of the 30S ribosomal subunit. Contacts proteins S3 and S10. Zn(2+) serves as cofactor.

In terms of biological role, binds 16S rRNA, required for the assembly of 30S particles and may also be responsible for determining the conformation of the 16S rRNA at the A site. The chain is Small ribosomal subunit protein uS14 from Malacoplasma penetrans (strain HF-2) (Mycoplasma penetrans).